We begin with the raw amino-acid sequence, 290 residues long: Light-independent protochlorophyllide reductase iron-sulfur ATP-binding protein (290 aa).

ATP is bound by residues 10 to 15 (GIGKST) and K39. S14 is a Mg(2+) binding site. [4Fe-4S] cluster is bound by residues C95 and C129. Residue 180 to 181 (NR) participates in ATP binding.

It belongs to the NifH/BchL/ChlL family. In terms of assembly, homodimer. Protochlorophyllide reductase is composed of three subunits; ChlL, ChlN and ChlB. [4Fe-4S] cluster is required as a cofactor.

The protein localises to the plastid. It localises to the chloroplast. The enzyme catalyses chlorophyllide a + oxidized 2[4Fe-4S]-[ferredoxin] + 2 ADP + 2 phosphate = protochlorophyllide a + reduced 2[4Fe-4S]-[ferredoxin] + 2 ATP + 2 H2O. Its pathway is porphyrin-containing compound metabolism; chlorophyll biosynthesis (light-independent). Component of the dark-operative protochlorophyllide reductase (DPOR) that uses Mg-ATP and reduced ferredoxin to reduce ring D of protochlorophyllide (Pchlide) to form chlorophyllide a (Chlide). This reaction is light-independent. The L component serves as a unique electron donor to the NB-component of the complex, and binds Mg-ATP. This Porphyra purpurea (Red seaweed) protein is Light-independent protochlorophyllide reductase iron-sulfur ATP-binding protein.